Consider the following 108-residue polypeptide: Large ribosomal subunit protein bL31B (108 aa).

A disordered region spans residues 86-108; it reads KPETVVEDVLPKGKKKSPAKKKK. A compositionally biased stretch (basic residues) spans 97–108; that stretch reads KGKKKSPAKKKK.

The protein belongs to the bacterial ribosomal protein bL31 family. Type B subfamily. Part of the 50S ribosomal subunit.

This is Large ribosomal subunit protein bL31B from Chlamydia trachomatis serovar L2 (strain ATCC VR-902B / DSM 19102 / 434/Bu).